Reading from the N-terminus, the 168-residue chain is Outer-membrane lipoprotein YfiB (168 aa).

The signal sequence occupies residues 1–25; that stretch reads MLPQRLHPSRLLALALFSLVLGLAG. C26 carries N-palmitoyl cysteine lipidation. C26 carries the S-diacylglycerol cysteine lipid modification. Residues 53-168 form the OmpA-like domain; sequence EGWEFGMSSK…RRVAIIVPAE (116 aa).

This sequence belongs to the outer membrane OOP (TC 1.B.6) superfamily. In terms of assembly, homodimer. Interacts with YfiR. The YfiB-YfiR complex is a 2:2 heterotetramer.

The protein localises to the cell outer membrane. Both lipid anchor in the outer membrane and peptidoglycan binding are required for full activity. Once activated by certain cell stress, the dimeric YfiB transforms from a compact conformation to a stretched conformation, allowing the periplasmic domain of the membrane-anchored YfiB to penetrate the cell wall and sequester the YfiR dimer. GMP enhances the binding affinity between YfiB and YfiR. Its function is as follows. Activates the diguanylate cyclase TpbB/YfiN by sequestering YfiR at the outer membrane, which counteracts the YfiR-mediated repression of TpbB/YfiN at the inner membrane and leads to increased c-di-GMP production. May act as a sensor of envelope stress. In terms of biological role, part of the YfiB-TpbB-YfiR (or yfiBNR) system, encoding a tripartite signaling module that modulates intracellular c-di-GMP levels. The system is a key regulator of the small colony variant (SCV) phenotype, and plays an important role in biofilm formation and in vivo persistence. The c-di-GMP produced by TpbB/YfiN stimulates the production of the Pel and Psl exopolysaccharides, which promotes surface attachment, generates an SCV phenotype and confers resistance against phagocytosis. This is Outer-membrane lipoprotein YfiB from Pseudomonas aeruginosa (strain ATCC 15692 / DSM 22644 / CIP 104116 / JCM 14847 / LMG 12228 / 1C / PRS 101 / PAO1).